A 654-amino-acid chain; its full sequence is Meiotically up-regulated gene 24 protein (654 aa).

Positions 299–355 (RNVFIGNLPSSYHEKEIEEAFGKFGKIEHIKILSKKNIAFVHFLNIRDAIKVVRTLS) constitute an RRM 1 domain. The tract at residues 383–404 (SCFTSKQNPDTTSDRCRQQESK) is disordered. A compositionally biased stretch (polar residues) spans 384 to 393 (CFTSKQNPDT). Positions 394-404 (TSDRCRQQESK) are enriched in basic and acidic residues. 2 RRM domains span residues 409–482 (RTVF…WGKE) and 500–571 (RNVY…YAPD).

The protein localises to the cytoplasm. Has a role in meiosis. This chain is Meiotically up-regulated gene 24 protein (mug24), found in Schizosaccharomyces pombe (strain 972 / ATCC 24843) (Fission yeast).